The sequence spans 494 residues: Guanosine-5'-triphosphate,3'-diphosphate pyrophosphatase (494 aa).

This sequence belongs to the GppA/Ppx family. GppA subfamily.

The enzyme catalyses guanosine 3'-diphosphate 5'-triphosphate + H2O = guanosine 3',5'-bis(diphosphate) + phosphate + H(+). It functions in the pathway purine metabolism; ppGpp biosynthesis; ppGpp from GTP: step 2/2. Functionally, catalyzes the conversion of pppGpp to ppGpp. Guanosine pentaphosphate (pppGpp) is a cytoplasmic signaling molecule which together with ppGpp controls the 'stringent response', an adaptive process that allows bacteria to respond to amino acid starvation, resulting in the coordinated regulation of numerous cellular activities. In Erwinia tasmaniensis (strain DSM 17950 / CFBP 7177 / CIP 109463 / NCPPB 4357 / Et1/99), this protein is Guanosine-5'-triphosphate,3'-diphosphate pyrophosphatase.